Reading from the N-terminus, the 187-residue chain is Threonylcarbamoyl-AMP synthase (187 aa).

The 185-residue stretch at 3 to 187 (EVLPADVAEL…AKSGQVIRKG (185 aa)) folds into the YrdC-like domain.

The protein belongs to the SUA5 family. TsaC subfamily.

The protein resides in the cytoplasm. The catalysed reaction is L-threonine + hydrogencarbonate + ATP = L-threonylcarbamoyladenylate + diphosphate + H2O. Required for the formation of a threonylcarbamoyl group on adenosine at position 37 (t(6)A37) in tRNAs that read codons beginning with adenine. Catalyzes the conversion of L-threonine, HCO(3)(-)/CO(2) and ATP to give threonylcarbamoyl-AMP (TC-AMP) as the acyladenylate intermediate, with the release of diphosphate. This Shewanella halifaxensis (strain HAW-EB4) protein is Threonylcarbamoyl-AMP synthase.